A 918-amino-acid chain; its full sequence is DNA repair and recombination protein RAD54B (918 aa).

Residues 1–11 show a composition bias toward polar residues; that stretch reads MRRSAAPSQVL. Positions 1-29 are disordered; that stretch reads MRRSAAPSQVLGNVAKKPRFIPPGKSNAL. The region spanning 320 to 487 is the Helicase ATP-binding domain; it reads GMRVSGRFGA…YALIEFVNPG (168 aa). Residue 333–340 participates in ATP binding; the sequence is DEMGLGKT. Residues 438-441 carry the DEGH box motif; sequence DEGH. The Helicase C-terminal domain maps to 653–817; sequence VLVKLLAAIR…HIHFSVEELR (165 aa). Residues 842-873 form a disordered region; sequence KDHQNPSSKKPSVSRCCQLRQDQGKHNSKKPL.

The protein belongs to the SNF2/RAD54 helicase family.

It localises to the nucleus. Its function is as follows. Involved in DNA repair and mitotic recombination. In Gallus gallus (Chicken), this protein is DNA repair and recombination protein RAD54B (RAD54B).